The sequence spans 460 residues: Cysteine--tRNA ligase (460 aa).

C29 lines the Zn(2+) pocket. The 'HIGH' region signature appears at 31 to 41 (PTVYDFAHIGN). Positions 227, 252, and 256 each coordinate Zn(2+). The 'KMSKS' region motif lies at 285-289 (KMSKS). K288 lines the ATP pocket.

The protein belongs to the class-I aminoacyl-tRNA synthetase family. Monomer. Requires Zn(2+) as cofactor.

It is found in the cytoplasm. The enzyme catalyses tRNA(Cys) + L-cysteine + ATP = L-cysteinyl-tRNA(Cys) + AMP + diphosphate. This Bradyrhizobium diazoefficiens (strain JCM 10833 / BCRC 13528 / IAM 13628 / NBRC 14792 / USDA 110) protein is Cysteine--tRNA ligase.